The chain runs to 179 residues: Large ribosomal subunit protein uL10 (179 aa).

The protein belongs to the universal ribosomal protein uL10 family. As to quaternary structure, part of the ribosomal stalk of the 50S ribosomal subunit. The N-terminus interacts with L11 and the large rRNA to form the base of the stalk. The C-terminus forms an elongated spine to which L12 dimers bind in a sequential fashion forming a multimeric L10(L12)X complex.

Functionally, forms part of the ribosomal stalk, playing a central role in the interaction of the ribosome with GTP-bound translation factors. This Thermomicrobium roseum (strain ATCC 27502 / DSM 5159 / P-2) protein is Large ribosomal subunit protein uL10.